A 321-amino-acid polypeptide reads, in one-letter code: Glycerol-3-phosphate phosphatase (321 aa).

The active-site Nucleophile is the D34. Residues D34, D36, and D260 each coordinate Mg(2+). D36 serves as the catalytic Proton donor.

Belongs to the HAD-like hydrolase superfamily. CbbY/CbbZ/Gph/YieH family. In terms of assembly, homodimer. Mg(2+) is required as a cofactor. As to expression, ubiquitously expressed with higher expression in testis, heart, skeletal muscle and islet tissue (at protein level).

It carries out the reaction O-phospho-L-tyrosyl-[protein] + H2O = L-tyrosyl-[protein] + phosphate. The catalysed reaction is sn-glycerol 1-phosphate + H2O = glycerol + phosphate. The enzyme catalyses sn-glycerol 3-phosphate + H2O = glycerol + phosphate. Inhibited by orthovanadate, beryllium trifluoride, Ca(2+) and EDTA. Its function is as follows. Glycerol-3-phosphate phosphatase hydrolyzing glycerol-3-phosphate into glycerol. Thereby, regulates the cellular levels of glycerol-3-phosphate a metabolic intermediate of glucose, lipid and energy metabolism. Was also shown to have a 2-phosphoglycolate phosphatase activity and a tyrosine-protein phosphatase activity. However, their physiological relevance is unclear. In vitro, also has a phosphatase activity toward ADP, ATP, GDP and GTP. The polypeptide is Glycerol-3-phosphate phosphatase (Mus musculus (Mouse)).